The following is a 177-amino-acid chain: MAEITTIARPYAKAAFDFAIEKNAVDSWAEMLNFAAMVSENETMKPLLSGSLASHQLAELFIGVCGEQVNEQGQNLLKVMAENGRLETLPAVSQLFVEMKHEWAKEIEANVVSATELSSEQQQEISVSLEKRLTRKVKLNCSIDASLIAGLIITAGDLVIDGSVRGKVSRLSDSLQS.

This sequence belongs to the ATPase delta chain family. In terms of assembly, F-type ATPases have 2 components, F(1) - the catalytic core - and F(0) - the membrane proton channel. F(1) has five subunits: alpha(3), beta(3), gamma(1), delta(1), epsilon(1). F(0) has three main subunits: a(1), b(2) and c(10-14). The alpha and beta chains form an alternating ring which encloses part of the gamma chain. F(1) is attached to F(0) by a central stalk formed by the gamma and epsilon chains, while a peripheral stalk is formed by the delta and b chains.

It localises to the cell inner membrane. In terms of biological role, f(1)F(0) ATP synthase produces ATP from ADP in the presence of a proton or sodium gradient. F-type ATPases consist of two structural domains, F(1) containing the extramembraneous catalytic core and F(0) containing the membrane proton channel, linked together by a central stalk and a peripheral stalk. During catalysis, ATP synthesis in the catalytic domain of F(1) is coupled via a rotary mechanism of the central stalk subunits to proton translocation. This protein is part of the stalk that links CF(0) to CF(1). It either transmits conformational changes from CF(0) to CF(1) or is implicated in proton conduction. The chain is ATP synthase subunit delta from Shewanella woodyi (strain ATCC 51908 / MS32).